Consider the following 473-residue polypeptide: UDP-N-acetylmuramate--L-alanine ligase (473 aa).

123 to 129 (GTHGKTT) contributes to the ATP binding site.

The protein belongs to the MurCDEF family.

It localises to the cytoplasm. The catalysed reaction is UDP-N-acetyl-alpha-D-muramate + L-alanine + ATP = UDP-N-acetyl-alpha-D-muramoyl-L-alanine + ADP + phosphate + H(+). It functions in the pathway cell wall biogenesis; peptidoglycan biosynthesis. In terms of biological role, cell wall formation. The polypeptide is UDP-N-acetylmuramate--L-alanine ligase (Marinomonas sp. (strain MWYL1)).